We begin with the raw amino-acid sequence, 200 residues long: Proteasome subunit beta 2 (200 aa).

Positions 1 to 7 (METKKTG) are cleaved as a propeptide — removed in mature form; by autocatalysis. Thr8 serves as the catalytic Nucleophile.

This sequence belongs to the peptidase T1B family. As to quaternary structure, the 20S proteasome core is composed of 14 alpha and 14 beta subunits that assemble into four stacked heptameric rings, resulting in a barrel-shaped structure. The two inner rings, each composed of seven catalytic beta subunits, are sandwiched by two outer rings, each composed of seven alpha subunits. The catalytic chamber with the active sites is on the inside of the barrel. Has a gated structure, the ends of the cylinder being occluded by the N-termini of the alpha-subunits. Is capped at one or both ends by the proteasome regulatory ATPase, PAN.

The protein localises to the cytoplasm. It catalyses the reaction Cleavage of peptide bonds with very broad specificity.. Its activity is regulated as follows. The formation of the proteasomal ATPase PAN-20S proteasome complex, via the docking of the C-termini of PAN into the intersubunit pockets in the alpha-rings, triggers opening of the gate for substrate entry. Interconversion between the open-gate and close-gate conformations leads to a dynamic regulation of the 20S proteasome proteolysis activity. Its function is as follows. Component of the proteasome core, a large protease complex with broad specificity involved in protein degradation. The polypeptide is Proteasome subunit beta 2 (Thermococcus onnurineus (strain NA1)).